Reading from the N-terminus, the 213-residue chain is Large ribosomal subunit protein uL1 (213 aa).

It belongs to the universal ribosomal protein uL1 family. As to quaternary structure, part of the 50S ribosomal subunit.

In terms of biological role, binds directly to 23S rRNA. Probably involved in E site tRNA release. Functionally, protein L1 is also a translational repressor protein, it controls the translation of its operon by binding to its mRNA. The chain is Large ribosomal subunit protein uL1 from Nanoarchaeum equitans (strain Kin4-M).